A 517-amino-acid polypeptide reads, in one-letter code: Crotonobetaine/carnitine--CoA ligase (517 aa).

This sequence belongs to the ATP-dependent AMP-binding enzyme family.

The enzyme catalyses 4-(trimethylamino)butanoate + ATP + CoA = 4-(trimethylamino)butanoyl-CoA + AMP + diphosphate. The catalysed reaction is crotonobetaine + ATP + CoA = crotonobetainyl-CoA + AMP + diphosphate. It carries out the reaction (R)-carnitine + ATP + CoA = (R)-carnitinyl-CoA + AMP + diphosphate. It functions in the pathway amine and polyamine metabolism; carnitine metabolism. Catalyzes the transfer of CoA to carnitine, generating the initial carnitinyl-CoA needed for the CaiB reaction cycle. Also has activity toward crotonobetaine and gamma-butyrobetaine. In Escherichia coli O7:K1 (strain IAI39 / ExPEC), this protein is Crotonobetaine/carnitine--CoA ligase.